A 424-amino-acid polypeptide reads, in one-letter code: Serine/threonine-protein kinase H1 (424 aa).

Residue Gly-2 is the site of N-myristoyl glycine attachment. Residue Cys-3 is the site of S-palmitoyl cysteine attachment. Residues 49–81 (KGGFPAASQGANPSPGTPRTSHTEPPSEPPRRA) form a disordered region. Over residues 57-72 (QGANPSPGTPRTSHTE) the composition is skewed to polar residues. The region spanning 98-355 (YDIKALIGRG…ALQALRHPWV (258 aa)) is the Protein kinase domain. ATP is bound by residues 104-112 (IGRGSFSRV) and Lys-127. Asp-218 serves as the catalytic Proton acceptor. The segment at 378–407 (RASSRCQSTKSAQSTRSSRSTRSNKSRRVR) is disordered. Phosphoserine; by autocatalysis is present on residues Ser-380 and Ser-381. The span at 385-398 (STKSAQSTRSSRST) shows a compositional bias: low complexity.

This sequence belongs to the protein kinase superfamily. CAMK Ser/Thr protein kinase family. Homodimer. In terms of processing, autophosphorylated on serine residues. Post-translationally, myristoylated. Required for membrane association. Prerequisite for palmitoylation to occur. Palmitoylated.

The protein localises to the golgi apparatus. It is found in the cytoplasm. Its subcellular location is the cytoskeleton. It localises to the microtubule organizing center. The protein resides in the centrosome. The protein localises to the nucleus speckle. It is found in the endoplasmic reticulum membrane. Its subcellular location is the cell membrane. It carries out the reaction L-seryl-[protein] + ATP = O-phospho-L-seryl-[protein] + ADP + H(+). It catalyses the reaction L-threonyl-[protein] + ATP = O-phospho-L-threonyl-[protein] + ADP + H(+). With respect to regulation, activity depends on Ca(2+) concentration. Its function is as follows. May be a SFC-associated serine kinase (splicing factor compartment-associated serine kinase) with a role in intranuclear SR protein (non-snRNP splicing factors containing a serine/arginine-rich domain) trafficking and pre-mRNA processing. This Bos taurus (Bovine) protein is Serine/threonine-protein kinase H1 (PSKH1).